We begin with the raw amino-acid sequence, 307 residues long: Cyclooctat-9-en-7-ol synthase (307 aa).

Positions 110, 220, 224, and 228 each coordinate Mg(2+). A DDXXD motif; degenerate motif is present at residues Asp-110–Asp-113. Positions Asn-220–Glu-228 match the NSE/DTE motif motif.

Belongs to the terpene synthase family. In terms of assembly, homodimer. Mg(2+) serves as cofactor.

It carries out the reaction geranylgeranyl diphosphate + H2O = cyclooctat-9-en-7-ol + diphosphate. In terms of biological role, catalyzes the cyclization of the linear isoprenoid intermediate geranylgeranyl diphosphate to tricycclic cyclooctat-9-en-7-ol in the cyclooctatin biosynthesis pathway. Cyclooctatin is a potent inhibitor of lysophospholipase. The chain is Cyclooctat-9-en-7-ol synthase from Streptomyces melanosporofaciens.